The following is a 750-amino-acid chain: uncharacterized protein (750 aa).

A run of 5 helical transmembrane segments spans residues 2-22 (FVLL…TNVI), 33-53 (SLIL…DIFI), 79-99 (LLVL…VVSL), 116-136 (LSIF…TIML), and 143-163 (IQSL…SPIA). Disordered regions lie at residues 385-461 (DNKG…KKKE) and 571-651 (NKEF…PLTA). Over residues 398–411 (ENTKGDDNSSEKTD) the composition is skewed to basic and acidic residues. The segment covering 412 to 424 (TVSVSTKLKTTAD) has biased composition (polar residues). The span at 425–436 (QSESTQMSSEST) shows a compositional bias: low complexity. The span at 437–451 (ATGISSDPQSQGKMN) shows a compositional bias: polar residues. Positions 452 to 461 (NKSEEQKKKE) are enriched in basic and acidic residues. A compositionally biased stretch (polar residues) spans 618-629 (DSKGNTATNSDT). Residues 724–744 (ATIVITLFLTVVLLAIAFFFF) form a helical membrane-spanning segment.

It to M.pneumoniae MPN_335.

The protein resides in the cell membrane. This is an uncharacterized protein from Mycoplasma pneumoniae (strain ATCC 29342 / M129 / Subtype 1) (Mycoplasmoides pneumoniae).